A 192-amino-acid polypeptide reads, in one-letter code: MIFCEKCRYSFNITKDVKSVQVGGKVNIALNNLFGKFNKNQQIVESDLTKLKVTDVLYDERFENMTKKDKKKMMSLIKSVNKSFFQEVGGQGELNTNKAYFICKYCKNYRPIEAGTTIYTKNYDTTDNSDIENYSFYIHDHTLQRTKNYICKNKDCKTHQNDNLKEAVLAKNSADQLVYVCTACTTHWINSI.

It localises to the virion. This is an uncharacterized protein from Acanthamoeba polyphaga mimivirus (APMV).